The primary structure comprises 428 residues: Adenylosuccinate synthetase (428 aa).

Residues glycine 12–lysine 18 and glycine 40–threonine 42 contribute to the GTP site. Aspartate 13 acts as the Proton acceptor in catalysis. Positions 13 and 40 each coordinate Mg(2+). IMP-binding positions include aspartate 13 to lysine 16, asparagine 38 to histidine 41, threonine 128, arginine 142, glutamine 223, threonine 238, and arginine 302. Residue histidine 41 is the Proton donor of the active site. Position 298–304 (valine 298–arginine 304) interacts with substrate. GTP-binding positions include arginine 304, lysine 330–aspartate 332, and glycine 413–glycine 415.

It belongs to the adenylosuccinate synthetase family. Homodimer. It depends on Mg(2+) as a cofactor.

The protein localises to the cytoplasm. The catalysed reaction is IMP + L-aspartate + GTP = N(6)-(1,2-dicarboxyethyl)-AMP + GDP + phosphate + 2 H(+). It participates in purine metabolism; AMP biosynthesis via de novo pathway; AMP from IMP: step 1/2. Plays an important role in the de novo pathway of purine nucleotide biosynthesis. Catalyzes the first committed step in the biosynthesis of AMP from IMP. The sequence is that of Adenylosuccinate synthetase from Acidothermus cellulolyticus (strain ATCC 43068 / DSM 8971 / 11B).